The primary structure comprises 138 residues: DNA-directed RNA polymerase subunit omega (138 aa).

Residues 117 to 138 (NLLGRDNFFSTPENRNTSNTDS) form a disordered region. A compositionally biased stretch (polar residues) spans 124-138 (FFSTPENRNTSNTDS).

Belongs to the RNA polymerase subunit omega family. The RNAP catalytic core consists of 2 alpha, 1 beta, 1 beta' and 1 omega subunit. When a sigma factor is associated with the core the holoenzyme is formed, which can initiate transcription.

The catalysed reaction is RNA(n) + a ribonucleoside 5'-triphosphate = RNA(n+1) + diphosphate. Functionally, promotes RNA polymerase assembly. Latches the N- and C-terminal regions of the beta' subunit thereby facilitating its interaction with the beta and alpha subunits. This Ehrlichia canis (strain Jake) protein is DNA-directed RNA polymerase subunit omega.